A 229-amino-acid polypeptide reads, in one-letter code: Trypsin (229 aa).

A propeptide spans 1 to 7 (APDDDDK) (activation peptide). The Peptidase S1 domain maps to 8-227 (IVGGYECPKH…YVSWIHETIA (220 aa)). Cystine bridges form between C14–C143, C32–C48, C116–C216, C123–C189, C154–C168, and C179–C203. The active-site Charge relay system is the H47. 2 residues coordinate Ca(2+): E59 and E69. D91 functions as the Charge relay system in the catalytic mechanism. Residue S183 is the Charge relay system of the active site.

The protein belongs to the peptidase S1 family. Ca(2+) is required as a cofactor.

The protein resides in the secreted. The protein localises to the extracellular space. It catalyses the reaction Preferential cleavage: Arg-|-Xaa, Lys-|-Xaa.. The polypeptide is Trypsin (Squalus acanthias (Spiny dogfish)).